The sequence spans 118 residues: Large ribosomal subunit protein bL20 (118 aa).

Belongs to the bacterial ribosomal protein bL20 family.

Its function is as follows. Binds directly to 23S ribosomal RNA and is necessary for the in vitro assembly process of the 50S ribosomal subunit. It is not involved in the protein synthesizing functions of that subunit. The protein is Large ribosomal subunit protein bL20 of Ectopseudomonas mendocina (strain ymp) (Pseudomonas mendocina).